Consider the following 92-residue polypeptide: Small ribosomal subunit protein bS20 (92 aa).

The segment at 1–24 is disordered; the sequence is MANSAQARKRARQAAKANSHNSAL.

The protein belongs to the bacterial ribosomal protein bS20 family.

Functionally, binds directly to 16S ribosomal RNA. This Paraburkholderia xenovorans (strain LB400) protein is Small ribosomal subunit protein bS20.